We begin with the raw amino-acid sequence, 99 residues long: Transmembrane protein 14A (99 aa).

Helical transmembrane passes span 1–21 (MDLIGFGYAALVTIGSVLGYK), 24–44 (GGVPSLIAGLSVGLLAGYGAY), and 79–99 (PAGLVAGLSLMMILRLVLLLL).

Belongs to the TMEM14 family.

It is found in the mitochondrion membrane. The protein localises to the endoplasmic reticulum membrane. In terms of biological role, inhibits apoptosis via negative regulation of the mitochondrial outer membrane permeabilization involved in apoptotic signaling pathway. The protein is Transmembrane protein 14A (Tmem14a) of Mus musculus (Mouse).